The chain runs to 119 residues: Large ribosomal subunit protein uL18 (119 aa).

It belongs to the universal ribosomal protein uL18 family. As to quaternary structure, part of the 50S ribosomal subunit; part of the 5S rRNA/L5/L18/L25 subcomplex. Contacts the 5S and 23S rRNAs.

In terms of biological role, this is one of the proteins that bind and probably mediate the attachment of the 5S RNA into the large ribosomal subunit, where it forms part of the central protuberance. The sequence is that of Large ribosomal subunit protein uL18 from Mycoplasmoides gallisepticum (strain R(low / passage 15 / clone 2)) (Mycoplasma gallisepticum).